Here is a 1111-residue protein sequence, read N- to C-terminus: uncharacterized protein (1111 aa).

The N-terminal stretch at methionine 1–alanine 31 is a signal peptide. The next 11 helical transmembrane spans lie at leucine 490–phenylalanine 510, leucine 538–cysteine 558, phenylalanine 572–leucine 592, isoleucine 620–glycine 640, aspartate 644–proline 664, isoleucine 694–isoleucine 714, phenylalanine 797–valine 817, serine 840–valine 860, isoleucine 885–leucine 905, glycine 922–phenylalanine 942, and leucine 1003–leucine 1023.

The protein belongs to the MscS (TC 1.A.23) family.

The protein resides in the cell membrane. This is an uncharacterized protein from Haemophilus influenzae (strain ATCC 51907 / DSM 11121 / KW20 / Rd).